The following is a 118-amino-acid chain: Large ribosomal subunit protein bL20 (118 aa).

Belongs to the bacterial ribosomal protein bL20 family.

Binds directly to 23S ribosomal RNA and is necessary for the in vitro assembly process of the 50S ribosomal subunit. It is not involved in the protein synthesizing functions of that subunit. The sequence is that of Large ribosomal subunit protein bL20 from Francisella tularensis subsp. novicida (strain U112).